Here is a 546-residue protein sequence, read N- to C-terminus: Chaperonin GroEL (546 aa).

Residues T30–P33, K51, D87–T91, G415, N479–A481, and D495 each bind ATP. The interval K526 to F546 is disordered. The segment covering A534 to F546 has biased composition (gly residues).

This sequence belongs to the chaperonin (HSP60) family. Forms a cylinder of 14 subunits composed of two heptameric rings stacked back-to-back. Interacts with the co-chaperonin GroES.

The protein localises to the cytoplasm. It catalyses the reaction ATP + H2O + a folded polypeptide = ADP + phosphate + an unfolded polypeptide.. Together with its co-chaperonin GroES, plays an essential role in assisting protein folding. The GroEL-GroES system forms a nano-cage that allows encapsulation of the non-native substrate proteins and provides a physical environment optimized to promote and accelerate protein folding. This Xanthomonas euvesicatoria pv. vesicatoria (strain 85-10) (Xanthomonas campestris pv. vesicatoria) protein is Chaperonin GroEL.